The primary structure comprises 411 residues: Squalene synthase (411 aa).

The next 2 membrane-spanning stretches (helical) occupy residues 281 to 301 (SIFRFCAIPQVMAIGTLAMCY) and 388 to 408 (SPVLIVVIFIILAIILAQLSG).

This sequence belongs to the phytoene/squalene synthase family. It depends on Mg(2+) as a cofactor.

The protein localises to the endoplasmic reticulum membrane. It carries out the reaction 2 (2E,6E)-farnesyl diphosphate + NADPH + H(+) = squalene + 2 diphosphate + NADP(+). It catalyses the reaction 2 (2E,6E)-farnesyl diphosphate + NADH + H(+) = squalene + 2 diphosphate + NAD(+). Its pathway is terpene metabolism; lanosterol biosynthesis; lanosterol from farnesyl diphosphate: step 1/3. The protein is Squalene synthase of Nicotiana benthamiana.